Reading from the N-terminus, the 323-residue chain is Beta-ketoacyl-[acyl-carrier-protein] synthase III (323 aa).

Residues Cys-114 and His-250 contribute to the active site. The interval 251 to 255 (QANLR) is ACP-binding. Residue Asn-280 is part of the active site.

The protein belongs to the thiolase-like superfamily. FabH family. Homodimer.

It localises to the cytoplasm. The catalysed reaction is malonyl-[ACP] + acetyl-CoA + H(+) = 3-oxobutanoyl-[ACP] + CO2 + CoA. The protein operates within lipid metabolism; fatty acid biosynthesis. Its function is as follows. Catalyzes the condensation reaction of fatty acid synthesis by the addition to an acyl acceptor of two carbons from malonyl-ACP. Catalyzes the first condensation reaction which initiates fatty acid synthesis and may therefore play a role in governing the total rate of fatty acid production. Possesses both acetoacetyl-ACP synthase and acetyl transacylase activities. Its substrate specificity determines the biosynthesis of branched-chain and/or straight-chain of fatty acids. This is Beta-ketoacyl-[acyl-carrier-protein] synthase III from Cereibacter sphaeroides (strain ATCC 17029 / ATH 2.4.9) (Rhodobacter sphaeroides).